The sequence spans 98 residues: Large ribosomal subunit protein uL23 (98 aa).

The protein belongs to the universal ribosomal protein uL23 family. As to quaternary structure, part of the 50S ribosomal subunit. Contacts protein L29, and trigger factor when it is bound to the ribosome.

Functionally, one of the early assembly proteins it binds 23S rRNA. One of the proteins that surrounds the polypeptide exit tunnel on the outside of the ribosome. Forms the main docking site for trigger factor binding to the ribosome. This Clostridium kluyveri (strain NBRC 12016) protein is Large ribosomal subunit protein uL23.